We begin with the raw amino-acid sequence, 233 residues long: Homeobox protein Hox-B6b (233 aa).

The Antp-type hexapeptide signature appears at 136–141; sequence IYPWMQ. The homeobox DNA-binding region spans 155–214; sequence GRRGRQTYTRYQTLELEKEFHFNRYLTRRRRIEISHALCLTERQIKIWFQNRRMKWKKEN. Positions 213–233 are disordered; it reads ENKLLNPSKTPEEEEEAEKKS. Over residues 224–233 the composition is skewed to acidic residues; sequence EEEEEAEKKS.

It belongs to the Antp homeobox family.

The protein resides in the nucleus. In terms of biological role, sequence-specific transcription factor which is part of a developmental regulatory system that provides cells with specific positional identities on the anterior-posterior axis. The sequence is that of Homeobox protein Hox-B6b (hoxb6b) from Takifugu rubripes (Japanese pufferfish).